Reading from the N-terminus, the 354-residue chain is Uroporphyrinogen decarboxylase (354 aa).

Substrate contacts are provided by residues 27–31 (RQAGR), aspartate 77, tyrosine 154, threonine 209, and histidine 327.

The protein belongs to the uroporphyrinogen decarboxylase family. Homodimer.

It is found in the cytoplasm. The catalysed reaction is uroporphyrinogen III + 4 H(+) = coproporphyrinogen III + 4 CO2. Its pathway is porphyrin-containing compound metabolism; protoporphyrin-IX biosynthesis; coproporphyrinogen-III from 5-aminolevulinate: step 4/4. Catalyzes the decarboxylation of four acetate groups of uroporphyrinogen-III to yield coproporphyrinogen-III. The chain is Uroporphyrinogen decarboxylase from Histophilus somni (strain 2336) (Haemophilus somnus).